Reading from the N-terminus, the 801-residue chain is Transducin beta-like protein 3 (801 aa).

Position 2 is an N-acetylalanine (Ala-2). WD repeat units lie at residues 64–105 (EDQE…RLWK), 107–146 (IHTA…GTHH), 149–190 (GSPG…CLAV), 193–232 (AHYS…TTRT), 245–284 (LPEQ…CVYT), 290–329 (GLRQ…LQKQ), 332–372 (GYSE…CQIL), 374–413 (GHTD…QVAC), 419–459 (GHTH…LAKS), 477–516 (CHDK…LLGV), 519–560 (GHRR…KTFE), 562–602 (HDAS…RTLD), and 604–642 (HEDK…EQAE). Ser-257 carries the phosphoserine modification. Residue Lys-407 forms a Glycyl lysine isopeptide (Lys-Gly) (interchain with G-Cter in SUMO2) linkage.

Part of the small subunit (SSU) processome, composed of more than 70 proteins and the RNA chaperone small nucleolar RNA (snoRNA) U3.

It localises to the nucleus. It is found in the nucleolus. In terms of biological role, part of the small subunit (SSU) processome, first precursor of the small eukaryotic ribosomal subunit. During the assembly of the SSU processome in the nucleolus, many ribosome biogenesis factors, an RNA chaperone and ribosomal proteins associate with the nascent pre-rRNA and work in concert to generate RNA folding, modifications, rearrangements and cleavage as well as targeted degradation of pre-ribosomal RNA by the RNA exosome. This chain is Transducin beta-like protein 3 (Tbl3), found in Mus musculus (Mouse).